A 542-amino-acid polypeptide reads, in one-letter code: MFS thioclapurine efflux transporter tcpA (542 aa).

Basic and acidic residues predominate over residues 1–10 (MATVGTEEKN). The segment at 1–24 (MATVGTEEKNPIGSASNTAEPNVT) is disordered. The span at 13–24 (GSASNTAEPNVT) shows a compositional bias: polar residues. Asparagine 22 is a glycosylation site (N-linked (GlcNAc...) asparagine). The next 3 helical transmembrane spans lie at 32-52 (SGFKLTIIVISLCLSLFLCGL), 75-97 (GWYTTAYLLTTSSFQIAYGKLYT), and 103-123 (MILLMALAIFELGSIICAAAP). Residue asparagine 124 is glycosylated (N-linked (GlcNAc...) asparagine). Transmembrane regions (helical) follow at residues 133 to 153 (AIAGLGAAGIFPGSTLVLVHA), 161 to 181 (ALLGITTGMFGIASLCGPFIG), 193 to 213 (CFIINVPLGVITAVIVTFFVF), 234 to 254 (IPEILVLVAALVCLVLGLQWG), 265 to 285 (IIALLVVFAVLTTAFLVLQVL), and 307 to 327 (IFALCSSGAMFIAVTYLPIYF). Asparagine 332 is a glycosylation site (N-linked (GlcNAc...) asparagine). Residues 339–359 (GVNVMPLILGFLVMSIISGVI) form a helical membrane-spanning segment. Residue asparagine 361 is glycosylated (N-linked (GlcNAc...) asparagine). Transmembrane regions (helical) follow at residues 370 to 390 (MFLCTILASVGAGLVSTFDVG), 396 to 416 (WIGYQALLGFGIGFGLQQPIV), 427 to 447 (VPFGVAFINMMQMLGGAIFVA), and 500 to 520 (VLGQVFLIATGLCVGTLLGSL).

Belongs to the major facilitator superfamily.

It is found in the cell membrane. MFS efflux transporter probably involved in thioclapurine export. The polypeptide is MFS thioclapurine efflux transporter tcpA (Claviceps purpurea (strain 20.1) (Ergot fungus)).